The chain runs to 500 residues: 7-alpha-hydroxycholest-4-en-3-one 12-alpha-hydroxylase (500 aa).

A helical transmembrane segment spans residues 4-24 (WCTVLGALLTVVGCLCLSLLL). Position 325 is a phosphoserine (S325). C439 contacts heme.

The protein belongs to the cytochrome P450 family. Heme serves as cofactor. As to expression, expressed in liver.

Its subcellular location is the endoplasmic reticulum membrane. The protein resides in the microsome membrane. It carries out the reaction 7alpha-hydroxycholest-4-en-3-one + reduced [NADPH--hemoprotein reductase] + O2 = 7alpha,12alpha-dihydroxycholest-4-en-3-one + oxidized [NADPH--hemoprotein reductase] + H2O + H(+). The catalysed reaction is 5beta-cholestane-3alpha,7alpha-diol + reduced [NADPH--hemoprotein reductase] + O2 = 5beta-cholestane-3alpha,7alpha,12alpha-triol + oxidized [NADPH--hemoprotein reductase] + H2O + H(+). It catalyses the reaction chenodeoxycholate + reduced [NADPH--hemoprotein reductase] + O2 = cholate + oxidized [NADPH--hemoprotein reductase] + H2O + H(+). It functions in the pathway lipid metabolism; bile acid biosynthesis. In terms of biological role, a cytochrome P450 monooxygenase involved in primary bile acid biosynthesis. Catalyzes the 12alpha-hydroxylation of 7alpha-hydroxy-4-cholesten-3-one, an intermediate metabolite in cholic acid biosynthesis. Controls biliary balance of cholic acid and chenodeoxycholic acid, ultimately regulating the intestinal absorption of dietary lipids. Mechanistically, uses molecular oxygen inserting one oxygen atom into a substrate, and reducing the second into a water molecule, with two electrons provided by NADPH via cytochrome P450 reductase (CPR; NADPH--hemoprotein reductase). The sequence is that of 7-alpha-hydroxycholest-4-en-3-one 12-alpha-hydroxylase (Cyp8b1) from Mus musculus (Mouse).